Here is a 307-residue protein sequence, read N- to C-terminus: Pollen allergen KBG 60 (307 aa).

Positions 1-22 (MAVQKYTVALFLVALVVGPAAS) are cleaved as a signal peptide.

It belongs to the Poa p IX/Phl p VI allergen family. Pollen.

This chain is Pollen allergen KBG 60, found in Poa pratensis (Kentucky bluegrass).